A 504-amino-acid polypeptide reads, in one-letter code: Activin receptor type-1 (504 aa).

Positions 1–16 (MALPVLLLLLALPSRS) are cleaved as a signal peptide. Topologically, residues 17–119 (VQDEELKLNE…EAAGYSMETL (103 aa)) are extracellular. An N-linked (GlcNAc...) asparagine glycan is attached at asparagine 94. Residues 120 to 140 (IIVILAPVVVLVIFSVVAVLI) traverse the membrane as a helical segment. Residues 141–504 (IRRIQKNHME…NSLDKLKADC (364 aa)) are Cytoplasmic-facing. In terms of domain architecture, GS spans 173–202 (STLADLLDHSCTSGSGSGLPFLVQRTVARQ). The 295-residue stretch at 203–497 (ITLVECVGKG…KTLTKIDNSL (295 aa)) folds into the Protein kinase domain. ATP-binding positions include 209–217 (VGKGRYGEV) and lysine 230. Aspartate 331 (proton acceptor) is an active-site residue.

It belongs to the protein kinase superfamily. TKL Ser/Thr protein kinase family. TGFB receptor subfamily. Mg(2+) serves as cofactor. Requires Mn(2+) as cofactor.

It localises to the membrane. The enzyme catalyses L-threonyl-[receptor-protein] + ATP = O-phospho-L-threonyl-[receptor-protein] + ADP + H(+). The catalysed reaction is L-seryl-[receptor-protein] + ATP = O-phospho-L-seryl-[receptor-protein] + ADP + H(+). In terms of biological role, on ligand binding, forms a receptor complex consisting of two type II and two type I transmembrane serine/threonine kinases. Type II receptors phosphorylate and activate type I receptors which autophosphorylate, then bind and activate SMAD transcriptional regulators. Receptor for activin. The sequence is that of Activin receptor type-1 (ACVR1) from Gallus gallus (Chicken).